The following is a 269-amino-acid chain: UPF0524 protein C3orf70 homolog A (269 aa).

Disordered stretches follow at residues 139–203 and 215–249; these read VQRP…DSGI and DEDS…QDEC. Over residues 141 to 150 the composition is skewed to pro residues; that stretch reads RPPPPTPNPT. Residues 151–164 are compositionally biased toward low complexity; sequence HQPQTAAPQPVPQR. A compositionally biased stretch (basic and acidic residues) spans 179–191; that stretch reads QAKEKISAPKMDH. A compositionally biased stretch (acidic residues) spans 215 to 233; sequence DEDSCVDDDDEEEEDDELS.

The protein belongs to the UPF0524 family.

Plays a role in neuronal and neurobehavioral development. Required for normal expression of neuronal markers elavl3 and eno2 and neurobehaviors related to circadian rhythm and changes in light-dark conditions. The sequence is that of UPF0524 protein C3orf70 homolog A from Danio rerio (Zebrafish).